Consider the following 301-residue polypeptide: Ribosomal RNA small subunit methyltransferase H (301 aa).

Residues 33–35 (GGH), aspartate 52, phenylalanine 79, aspartate 100, and glutamine 107 contribute to the S-adenosyl-L-methionine site.

This sequence belongs to the methyltransferase superfamily. RsmH family.

Its subcellular location is the cytoplasm. It catalyses the reaction cytidine(1402) in 16S rRNA + S-adenosyl-L-methionine = N(4)-methylcytidine(1402) in 16S rRNA + S-adenosyl-L-homocysteine + H(+). Its function is as follows. Specifically methylates the N4 position of cytidine in position 1402 (C1402) of 16S rRNA. The polypeptide is Ribosomal RNA small subunit methyltransferase H (Mycoplasmopsis synoviae (strain 53) (Mycoplasma synoviae)).